A 130-amino-acid polypeptide reads, in one-letter code: Methylglyoxal synthase (130 aa).

Residues 1-130 (MSKPRIALIA…DLARNMQDVC (130 aa)) enclose the MGS-like domain. Substrate contacts are provided by residues histidine 11, lysine 15, 37–40 (TGTT), and 57–58 (SG). Aspartate 63 (proton donor/acceptor) is an active-site residue. Histidine 90 is a substrate binding site.

This sequence belongs to the methylglyoxal synthase family.

The enzyme catalyses dihydroxyacetone phosphate = methylglyoxal + phosphate. In terms of biological role, catalyzes the formation of methylglyoxal from dihydroxyacetone phosphate. This is Methylglyoxal synthase from Burkholderia lata (strain ATCC 17760 / DSM 23089 / LMG 22485 / NCIMB 9086 / R18194 / 383).